The sequence spans 311 residues: Cell division protein ZipA (311 aa).

At 1-6 (MENLQL) the chain is on the periplasmic side. A helical transmembrane segment spans residues 7-27 (VLFVLGAIAIIAVLVHGFWSI). Residues 28–311 (RKQQPKSLKE…YLQRIRAQLD (284 aa)) are Cytoplasmic-facing. The tract at residues 46–114 (DQASVRDSQG…FALSDEPVQR (69 aa)) is disordered. 2 stretches are compositionally biased toward basic and acidic residues: residues 62–83 (GEVR…DKPV) and 94–103 (RDVEDSRHEQ).

It belongs to the ZipA family. As to quaternary structure, interacts with FtsZ via their C-terminal domains.

The protein resides in the cell inner membrane. In terms of biological role, essential cell division protein that stabilizes the FtsZ protofilaments by cross-linking them and that serves as a cytoplasmic membrane anchor for the Z ring. Also required for the recruitment to the septal ring of downstream cell division proteins. This is Cell division protein ZipA from Shewanella woodyi (strain ATCC 51908 / MS32).